A 414-amino-acid chain; its full sequence is Gamma-glutamyl phosphate reductase (414 aa).

It belongs to the gamma-glutamyl phosphate reductase family.

Its subcellular location is the cytoplasm. It carries out the reaction L-glutamate 5-semialdehyde + phosphate + NADP(+) = L-glutamyl 5-phosphate + NADPH + H(+). The protein operates within amino-acid biosynthesis; L-proline biosynthesis; L-glutamate 5-semialdehyde from L-glutamate: step 2/2. Catalyzes the NADPH-dependent reduction of L-glutamate 5-phosphate into L-glutamate 5-semialdehyde and phosphate. The product spontaneously undergoes cyclization to form 1-pyrroline-5-carboxylate. The chain is Gamma-glutamyl phosphate reductase from Francisella philomiragia subsp. philomiragia (strain ATCC 25017 / CCUG 19701 / FSC 153 / O#319-036).